A 341-amino-acid polypeptide reads, in one-letter code: Glycerol-3-phosphate dehydrogenase [NAD(P)+] (341 aa).

Residues Ser15, Trp16, Arg36, and Lys110 each coordinate NADPH. Residues Lys110, Gly139, and Ser141 each coordinate sn-glycerol 3-phosphate. Ala143 provides a ligand contact to NADPH. Sn-glycerol 3-phosphate is bound by residues Lys194, Asp247, Ser257, Arg258, and Asn259. Residue Lys194 is the Proton acceptor of the active site. Arg258 lines the NADPH pocket. Residues Val282 and Glu284 each contribute to the NADPH site.

The protein belongs to the NAD-dependent glycerol-3-phosphate dehydrogenase family.

Its subcellular location is the cytoplasm. It carries out the reaction sn-glycerol 3-phosphate + NAD(+) = dihydroxyacetone phosphate + NADH + H(+). It catalyses the reaction sn-glycerol 3-phosphate + NADP(+) = dihydroxyacetone phosphate + NADPH + H(+). It functions in the pathway membrane lipid metabolism; glycerophospholipid metabolism. In terms of biological role, catalyzes the reduction of the glycolytic intermediate dihydroxyacetone phosphate (DHAP) to sn-glycerol 3-phosphate (G3P), the key precursor for phospholipid synthesis. This Xanthomonas oryzae pv. oryzae (strain MAFF 311018) protein is Glycerol-3-phosphate dehydrogenase [NAD(P)+].